Reading from the N-terminus, the 141-residue chain is MVHSQLPVAAPLRLLCALLLLPSATMIPGGLSPRSVTDPDVQKAAEFAVQEYNALSTNAYYYKQLRIVEAQSQVVAGAKYYLTMELMKTKCAKTTGKPKVYKEIQNCELPPKAQQEKLTCHFQVWSRPWLEKVELTKMSCN.

The first 26 residues, 1 to 26, serve as a signal peptide directing secretion; it reads MVHSQLPVAAPLRLLCALLLLPSATM. Residues 29-129 enclose the Cystatin domain; sequence GGLSPRSVTD…CHFQVWSRPW (101 aa). The Secondary area of contact motif lies at 73–77; that stretch reads QVVAG. Intrachain disulfides connect Cys91–Cys107 and Cys120–Cys140.

This sequence belongs to the cystatin family. In terms of tissue distribution, expressed at a low level by the venom gland (at protein level).

Its subcellular location is the secreted. Inhibits various C1 cysteine proteases including cathepsin L, papain and cathepsin B. This protein has no toxic activity and its function in the venom is unknown. It may play a role as a housekeeping or regulatory protein. This chain is Cystatin, found in Oxyuranus scutellatus scutellatus (Australian taipan).